The primary structure comprises 521 residues: Bifunctional purine biosynthesis protein PurH (521 aa).

Positions 1 to 147 (MAVIKRALIS…KNNRDVTVVV (147 aa)) constitute an MGS-like domain.

It belongs to the PurH family.

It catalyses the reaction (6R)-10-formyltetrahydrofolate + 5-amino-1-(5-phospho-beta-D-ribosyl)imidazole-4-carboxamide = 5-formamido-1-(5-phospho-D-ribosyl)imidazole-4-carboxamide + (6S)-5,6,7,8-tetrahydrofolate. The catalysed reaction is IMP + H2O = 5-formamido-1-(5-phospho-D-ribosyl)imidazole-4-carboxamide. It participates in purine metabolism; IMP biosynthesis via de novo pathway; 5-formamido-1-(5-phospho-D-ribosyl)imidazole-4-carboxamide from 5-amino-1-(5-phospho-D-ribosyl)imidazole-4-carboxamide (10-formyl THF route): step 1/1. The protein operates within purine metabolism; IMP biosynthesis via de novo pathway; IMP from 5-formamido-1-(5-phospho-D-ribosyl)imidazole-4-carboxamide: step 1/1. The protein is Bifunctional purine biosynthesis protein PurH of Syntrophotalea carbinolica (strain DSM 2380 / NBRC 103641 / GraBd1) (Pelobacter carbinolicus).